The chain runs to 312 residues: Isoflavone reductase homolog (312 aa).

NADP(+)-binding positions include Gly10–Gly16, Arg35, and Lys44. Residue Lys138 is the Proton acceptor of the active site. Residue Arg142 coordinates NADP(+). His270 contacts substrate.

This sequence belongs to the NmrA-type oxidoreductase family. Isoflavone reductase subfamily.

This is Isoflavone reductase homolog from Lupinus albus (White lupine).